Here is a 327-residue protein sequence, read N- to C-terminus: BarH-like 1 homeobox protein (327 aa).

Disordered regions lie at residues 1–90 (MEGS…AQSR), 113–181 (PYSS…PRKA), and 303–327 (LQGA…AQPR). A compositionally biased stretch (low complexity) spans 33-54 (RSPLELSPRSESSSDCSSPASP). Over residues 79-90 (QPGQLSAPAQSR) the composition is skewed to polar residues. Basic and acidic residues-rich tracts occupy residues 133-143 (AGEDFRDKLDK) and 152-166 (SEYK…EISS). Residues 178–237 (PRKARTAFTDHQLAQLERSFERQKYLSVQDRMELAASLNLTDTQVKTWYQNRRTKWKRQT) constitute a DNA-binding region (homeobox). Residues 308–318 (EPPPPLPPLPG) show a composition bias toward pro residues.

This sequence belongs to the BAR homeobox family.

Its subcellular location is the nucleus. The sequence is that of BarH-like 1 homeobox protein (Barhl1) from Mus musculus (Mouse).